The sequence spans 414 residues: MSLQSYDKDIYDLVNLELKRQCDHLEMIASENFTYPEVMEVMGSILTNKYAEGYPGKRYYGGCEFVDEIEQIAIDRCKELFGCEFANVQPNSGSQANQGVYGALLNPGDKILGMDLSHGGHLTHGAKVSSSGKMYESFFYGVELDGRINYDRVMDIAKIVKPKMIVCGASAYTREIEFKKFREIADAVGAILFADVAHIAGLVVAGEHQNPFPHCDVVSSTTHKTLRGPRGGIIMTNNEEYAKKINSSIFPGIQGGPLVHVIAAKAVGFKHNLSPEWKIYAKQVKANAKKLGKVLISRGFDLVSGGTDNHLILMSFLNRDFSGKDADIALGNAGITVNKNTVPGETRSPFITSGIRVGSPALTARGMKEAEFELIANKIADVLSDINNASLQEKIKGELKELAHKFIIYDKATF.

Residues Leu-116 and 120-122 each bind (6S)-5,6,7,8-tetrahydrofolate; that span reads GHL. Lys-224 carries the post-translational modification N6-(pyridoxal phosphate)lysine. (6S)-5,6,7,8-tetrahydrofolate is bound by residues Glu-240 and 348 to 350; that span reads SPF.

The protein belongs to the SHMT family. Homodimer. Requires pyridoxal 5'-phosphate as cofactor.

The protein localises to the cytoplasm. The enzyme catalyses (6R)-5,10-methylene-5,6,7,8-tetrahydrofolate + glycine + H2O = (6S)-5,6,7,8-tetrahydrofolate + L-serine. Its pathway is one-carbon metabolism; tetrahydrofolate interconversion. The protein operates within amino-acid biosynthesis; glycine biosynthesis; glycine from L-serine: step 1/1. In terms of biological role, catalyzes the reversible interconversion of serine and glycine with tetrahydrofolate (THF) serving as the one-carbon carrier. This reaction serves as the major source of one-carbon groups required for the biosynthesis of purines, thymidylate, methionine, and other important biomolecules. Also exhibits THF-independent aldolase activity toward beta-hydroxyamino acids, producing glycine and aldehydes, via a retro-aldol mechanism. This Campylobacter concisus (strain 13826) protein is Serine hydroxymethyltransferase.